Reading from the N-terminus, the 948-residue chain is Protein translocase subunit SecA (948 aa).

ATP-binding positions include glutamine 91, 109–113 (GEGKT), and aspartate 509.

Belongs to the SecA family. Monomer and homodimer. Part of the essential Sec protein translocation apparatus which comprises SecA, SecYEG and auxiliary proteins SecDF. Other proteins may also be involved.

The protein localises to the cell inner membrane. The protein resides in the cellular thylakoid membrane. It is found in the cytoplasm. The enzyme catalyses ATP + H2O + cellular proteinSide 1 = ADP + phosphate + cellular proteinSide 2.. In terms of biological role, part of the Sec protein translocase complex. Interacts with the SecYEG preprotein conducting channel. Has a central role in coupling the hydrolysis of ATP to the transfer of proteins into and across the cell membrane, serving as an ATP-driven molecular motor driving the stepwise translocation of polypeptide chains across the membrane. Its function is as follows. Probably participates in protein translocation into and across both the cytoplasmic and thylakoid membranes in cyanobacterial cells. The sequence is that of Protein translocase subunit SecA from Synechococcus elongatus (strain ATCC 33912 / PCC 7942 / FACHB-805) (Anacystis nidulans R2).